Consider the following 201-residue polypeptide: Large ribosomal subunit protein uL4 (201 aa).

Residues 43 to 66 form a disordered region; the sequence is TRAQKTRSEVSGGGKKPWRQKGTG.

It belongs to the universal ribosomal protein uL4 family. As to quaternary structure, part of the 50S ribosomal subunit.

Functionally, one of the primary rRNA binding proteins, this protein initially binds near the 5'-end of the 23S rRNA. It is important during the early stages of 50S assembly. It makes multiple contacts with different domains of the 23S rRNA in the assembled 50S subunit and ribosome. Forms part of the polypeptide exit tunnel. In Tolumonas auensis (strain DSM 9187 / NBRC 110442 / TA 4), this protein is Large ribosomal subunit protein uL4.